Consider the following 623-residue polypeptide: Glutathione import ATP-binding protein GsiA (623 aa).

2 consecutive ABC transporter domains span residues 15 to 269 (VENL…RALL) and 314 to 564 (LRVR…RKLL). Residues 49–56 (GESGSGKS) and 357–364 (GESGSGKS) contribute to the ATP site.

It belongs to the ABC transporter superfamily. Glutathione importer (TC 3.A.1.5.11) family. In terms of assembly, the complex is composed of two ATP-binding proteins (GsiA), two transmembrane proteins (GsiC and GsiD) and a solute-binding protein (GsiB).

The protein resides in the cell inner membrane. The enzyme catalyses glutathione(out) + ATP + H2O = glutathione(in) + ADP + phosphate + H(+). Functionally, part of the ABC transporter complex GsiABCD involved in glutathione import. Responsible for energy coupling to the transport system. This Shigella dysenteriae serotype 1 (strain Sd197) protein is Glutathione import ATP-binding protein GsiA.